Here is a 531-residue protein sequence, read N- to C-terminus: Probable protein phosphatase 2C 66 (531 aa).

Positions 1–47 (MGSCLSSDLPPRAGAGAGASPGWPQRWRRRRQRGVERGGAVSGGGGG) are disordered. The segment covering 10–25 (PPRAGAGAGASPGWPQ) has biased composition (low complexity). The PPM-type phosphatase domain occupies 88–401 (AACLHTQQGR…DDCAVVCLFL (314 aa)). Mn(2+)-binding residues include Asp123 and Gly124. Positions 151 to 172 (SANEDTSSHQNGSISGSVNSEE) are enriched in polar residues. A disordered region spans residues 151 to 176 (SANEDTSSHQNGSISGSVNSEESPVV). Residues Asp346 and Asp392 each coordinate Mn(2+).

Belongs to the PP2C family. It depends on Mg(2+) as a cofactor. The cofactor is Mn(2+).

It carries out the reaction O-phospho-L-seryl-[protein] + H2O = L-seryl-[protein] + phosphate. The catalysed reaction is O-phospho-L-threonyl-[protein] + H2O = L-threonyl-[protein] + phosphate. This is Probable protein phosphatase 2C 66 from Oryza sativa subsp. japonica (Rice).